Reading from the N-terminus, the 100-residue chain is Urease subunit gamma (100 aa).

The protein belongs to the urease gamma subunit family. In terms of assembly, heterotrimer of UreA (gamma), UreB (beta) and UreC (alpha) subunits. Three heterotrimers associate to form the active enzyme.

It localises to the cytoplasm. It carries out the reaction urea + 2 H2O + H(+) = hydrogencarbonate + 2 NH4(+). The protein operates within nitrogen metabolism; urea degradation; CO(2) and NH(3) from urea (urease route): step 1/1. This chain is Urease subunit gamma, found in Prochlorococcus marinus (strain MIT 9215).